Here is a 153-residue protein sequence, read N- to C-terminus: Ribonuclease H (153 aa).

Residues methionine 1 to glutamate 142 enclose the RNase H type-1 domain. Mg(2+) is bound by residues aspartate 10, glutamate 48, aspartate 70, and aspartate 134.

Belongs to the RNase H family. Monomer. Mg(2+) serves as cofactor.

The protein resides in the cytoplasm. The catalysed reaction is Endonucleolytic cleavage to 5'-phosphomonoester.. Functionally, endonuclease that specifically degrades the RNA of RNA-DNA hybrids. The polypeptide is Ribonuclease H (Baumannia cicadellinicola subsp. Homalodisca coagulata).